The following is a 248-amino-acid chain: Probable phosphatase VPA0505 (248 aa).

Residues His-8, His-10, His-16, His-41, Glu-74, His-102, His-132, Asp-194, and His-196 each coordinate Zn(2+).

The protein belongs to the PHP family. The cofactor is Zn(2+).

The chain is Probable phosphatase VPA0505 from Vibrio parahaemolyticus serotype O3:K6 (strain RIMD 2210633).